The primary structure comprises 142 residues: MDMGLREMCVGEKRTVIIPPHLGYGEAGVDGEVPGSAVLVFDIELLELVAGLPEGYMFIWNGEVSPNLFEEIDKDGNGEVLLEEFSEYIHAQVASGKGKLAPGFDAELIVKNMFTNQDRNGDGKVTAEEFKLKDQEAKQDEL.

The PPIase FKBP-type domain occupies 1-49 (MDMGLREMCVGEKRTVIIPPHLGYGEAGVDGEVPGSAVLVFDIELLELV). EF-hand domains are found at residues 60-95 (WNGE…QVAS) and 105-140 (DAEL…AKQD). The Ca(2+) site is built by Asp-118, Asn-120, Asp-122, Lys-124, and Glu-129.

This is Putative FK506-binding protein 9-like protein (FKBP9P1) from Homo sapiens (Human).